Consider the following 228-residue polypeptide: Vesicle transport protein SEC20 (228 aa).

Residues M1–L199 are Cytoplasmic-facing. Positions L37–S90 form a coiled coil. A helical; Anchor for type IV membrane protein membrane pass occupies residues T200 to V220. The Lumenal segment spans residues K221 to L228.

The protein belongs to the SEC20 family. In terms of assembly, component of a SNARE complex consisting of STX18, USE1L, BNIP1/SEC20L and SEC22B. Interacts directly with STX18, RINT1/TIP20L and NAPA. Interacts with ZW10 through RINT1. Interacts with BCL2. Interacts with RNF186. Interacts with RNF185. Interacts with SQSTM1; increased by 'Lys-63'-linked polyubiquitination of BNIP1. As to quaternary structure, (Microbial infection) Interacts with adenovirus E1B 19K protein; plays a role in the suppression of cell apoptosis by the viral protein. Post-translationally, polyubiquitinated. 'Lys-63'-linked polyubiquitination by RNF185 increases the interaction with the autophagy receptor SQSTM1. Undergoes 'Lys-29'- and 'Lys-63'-linked polyubiquitination by RNF186 that may regulate BNIP1 localization to the mitochondrion. In terms of tissue distribution, isoform 1 is highly expressed in heart, brain, liver skeletal muscle and pancreas. Isoform 3 is moderately expressed in placenta, lung and kidney. Isoform 4 is highly expressed in testis and small intestine.

It is found in the endoplasmic reticulum membrane. The protein localises to the mitochondrion membrane. In terms of biological role, as part of a SNARE complex may be involved in endoplasmic reticulum membranes fusion and be required for the maintenance of endoplasmic reticulum organization. Also plays a role in apoptosis. It is for instance required for endoplasmic reticulum stress-induced apoptosis. As a substrate of RNF185 interacting with SQSTM1, might also be involved in mitochondrial autophagy. The protein is Vesicle transport protein SEC20 (BNIP1) of Homo sapiens (Human).